We begin with the raw amino-acid sequence, 283 residues long: GTPase Era (283 aa).

One can recognise an Era-type G domain in the interval 7-175 (YCGHVIIVGK…KNIIKSYLPE (169 aa)). Residues 15–22 (GKANVGKS) form a G1 region. Position 15 to 22 (15 to 22 (GKANVGKS)) interacts with GTP. The interval 41 to 45 (NTTQS) is G2. The interval 62-65 (DTPG) is G3. GTP contacts are provided by residues 62 to 66 (DTPGV) and 124 to 127 (NKID). Residues 124-127 (NKID) are G4. The segment at 154–156 (ISA) is G5. Positions 198–283 (IREQLILFLG…HLVLWVKDKN (86 aa)) constitute a KH type-2 domain.

This sequence belongs to the TRAFAC class TrmE-Era-EngA-EngB-Septin-like GTPase superfamily. Era GTPase family. In terms of assembly, monomer.

The protein localises to the cytoplasm. Its subcellular location is the cell membrane. In terms of biological role, an essential GTPase that binds both GDP and GTP, with rapid nucleotide exchange. Plays a role in 16S rRNA processing and 30S ribosomal subunit biogenesis and possibly also in cell cycle regulation and energy metabolism. The sequence is that of GTPase Era from Buchnera aphidicola subsp. Acyrthosiphon pisum (strain APS) (Acyrthosiphon pisum symbiotic bacterium).